The chain runs to 87 residues: Large ribosomal subunit protein bL27 (87 aa).

Positions 1–11 (MASKASGGSTR) are enriched in polar residues. Residues 1–21 (MASKASGGSTRNGRDSNSKRL) form a disordered region.

It belongs to the bacterial ribosomal protein bL27 family.

The protein is Large ribosomal subunit protein bL27 of Hydrogenobaculum sp. (strain Y04AAS1).